Here is a 469-residue protein sequence, read N- to C-terminus: Acetyl-CoA decarbonylase/synthase complex subunit beta 1 (469 aa).

[Ni-Fe-S] cluster is bound by residues Cys189, Cys192, Cys278, and Cys280.

This sequence belongs to the CdhC family. As to quaternary structure, monomer. The ACDS complex is made up of alpha, epsilon, beta, gamma and delta chains with a probable stoichiometry of (alpha(2)epsilon(2))(4)-beta(8)-(gamma(1)delta(1))(8) (Potential). The cofactor is [Ni-Fe-S] cluster.

The catalysed reaction is Co(I)-[corrinoid Fe-S protein] + acetyl-CoA + H(+) = methyl-Co(III)-[corrinoid Fe-S protein] + CO + CoA. It participates in one-carbon metabolism; methanogenesis from acetate. Part of a complex that catalyzes the reversible cleavage of acetyl-CoA, allowing growth on acetate as sole source of carbon and energy. The alpha-epsilon complex generates CO from CO(2), while the beta subunit (this protein) combines the CO with CoA and a methyl group to form acetyl-CoA. The methyl group, which is incorporated into acetyl-CoA, is transferred to the beta subunit by a corrinoid iron-sulfur protein (the gamma-delta complex). The chain is Acetyl-CoA decarbonylase/synthase complex subunit beta 1 (cdhC1) from Methanosarcina mazei (strain ATCC BAA-159 / DSM 3647 / Goe1 / Go1 / JCM 11833 / OCM 88) (Methanosarcina frisia).